A 147-amino-acid polypeptide reads, in one-letter code: Myoglobin (147 aa).

In terms of domain architecture, Globin spans 2–141 (ADFDMVLKCW…IIADMEADYK (140 aa)). H60 contacts nitrite. H60 serves as a coordination point for O2. Heme b is bound at residue H89.

Belongs to the globin family. As to quaternary structure, monomeric.

The protein localises to the cytoplasm. The protein resides in the sarcoplasm. It carries out the reaction Fe(III)-heme b-[protein] + nitric oxide + H2O = Fe(II)-heme b-[protein] + nitrite + 2 H(+). It catalyses the reaction H2O2 + AH2 = A + 2 H2O. Its function is as follows. Monomeric heme protein which primary function is to store oxygen and facilitate its diffusion within muscle tissues. Reversibly binds oxygen through a pentacoordinated heme iron and enables its timely and efficient release as needed during periods of heightened demand. Depending on the oxidative conditions of tissues and cells, and in addition to its ability to bind oxygen, it also has a nitrite reductase activity whereby it regulates the production of bioactive nitric oxide. Under stress conditions, like hypoxia and anoxia, it also protects cells against reactive oxygen species thanks to its pseudoperoxidase activity. In Notothenia neglecta (Yellowbelly rockcod), this protein is Myoglobin (mb).